The primary structure comprises 328 residues: D-cysteine desulfhydrase (328 aa).

An N6-(pyridoxal phosphate)lysine modification is found at Lys51.

This sequence belongs to the ACC deaminase/D-cysteine desulfhydrase family. In terms of assembly, homodimer. Requires pyridoxal 5'-phosphate as cofactor.

It catalyses the reaction D-cysteine + H2O = hydrogen sulfide + pyruvate + NH4(+) + H(+). In terms of biological role, catalyzes the alpha,beta-elimination reaction of D-cysteine and of several D-cysteine derivatives. It could be a defense mechanism against D-cysteine. This Escherichia fergusonii (strain ATCC 35469 / DSM 13698 / CCUG 18766 / IAM 14443 / JCM 21226 / LMG 7866 / NBRC 102419 / NCTC 12128 / CDC 0568-73) protein is D-cysteine desulfhydrase.